A 349-amino-acid polypeptide reads, in one-letter code: N-acetyl-gamma-glutamyl-phosphate reductase (349 aa).

The active site involves C149.

This sequence belongs to the NAGSA dehydrogenase family. Type 1 subfamily.

It localises to the cytoplasm. The catalysed reaction is N-acetyl-L-glutamate 5-semialdehyde + phosphate + NADP(+) = N-acetyl-L-glutamyl 5-phosphate + NADPH + H(+). The protein operates within amino-acid biosynthesis; L-arginine biosynthesis; N(2)-acetyl-L-ornithine from L-glutamate: step 3/4. Its function is as follows. Catalyzes the NADPH-dependent reduction of N-acetyl-5-glutamyl phosphate to yield N-acetyl-L-glutamate 5-semialdehyde. This Acinetobacter baylyi (strain ATCC 33305 / BD413 / ADP1) protein is N-acetyl-gamma-glutamyl-phosphate reductase.